A 305-amino-acid chain; its full sequence is N-acetyl-D-glucosamine kinase (305 aa).

Residues Gly4–Lys11 and Gly133–Phe140 each bind ATP. Zn(2+) contacts are provided by His157, Cys178, Cys180, and Cys185.

The protein belongs to the ROK (NagC/XylR) family. NagK subfamily.

The enzyme catalyses N-acetyl-D-glucosamine + ATP = N-acetyl-D-glucosamine 6-phosphate + ADP + H(+). The protein operates within cell wall biogenesis; peptidoglycan recycling. Functionally, catalyzes the phosphorylation of N-acetyl-D-glucosamine (GlcNAc) derived from cell-wall degradation, yielding GlcNAc-6-P. The sequence is that of N-acetyl-D-glucosamine kinase from Histophilus somni (strain 129Pt) (Haemophilus somnus).